Reading from the N-terminus, the 167-residue chain is V-type proton ATPase subunit c' (167 aa).

Residues 1 to 13 are Lumenal-facing; the sequence is MAEIMADSELAPK. The helical transmembrane segment at 14–34 threads the bilayer; sequence FAPFIGMAGIAAAMIFGSAGA. Over 35-59 the chain is Cytoplasmic; it reads AYGTAKSGIGIAGVGTFRPDLIMKC. A helical membrane pass occupies residues 60 to 80; sequence LIPVVMSGIIAVYALVVAVLI. Residues 81-101 are Lumenal-facing; that stretch reads AQDLGPPGSGQHYSLFNGFMH. Residues 102–122 traverse the membrane as a helical segment; that stretch reads LACGLSVGLTGLAAGYCIGIV. Residues 123–140 are Cytoplasmic-facing; it reads GDKGVRSFMLQSRIFVGM. The helical transmembrane segment at 141–161 threads the bilayer; the sequence is VLILIFGEVLGLYGLIVALIL. At 162 to 167 the chain is on the lumenal side; it reads NTKSKG.

It belongs to the V-ATPase proteolipid subunit family. In terms of assembly, V-ATPase is a heteromultimeric enzyme composed of a peripheral catalytic V1 complex (components A to H) attached to an integral membrane V0 proton pore complex (components: a, c, c', c'', d, e, f and VOA1). The decameric c-ring forms the proton-conducting pore, and is composed of eight proteolipid subunits c, one subunit c' and one subunit c''.

Its subcellular location is the vacuole membrane. In terms of biological role, proton-conducting pore forming subunit of the V0 complex of vacuolar(H+)-ATPase (V-ATPase), a multisubunit enzyme composed of a peripheral complex (V1) that hydrolyzes ATP and a membrane integral complex (V0) that translocates protons. V-ATPase is responsible for acidifying and maintaining the pH of intracellular compartments. The sequence is that of V-type proton ATPase subunit c' (vma-11) from Neurospora crassa (strain ATCC 24698 / 74-OR23-1A / CBS 708.71 / DSM 1257 / FGSC 987).